We begin with the raw amino-acid sequence, 94 residues long: Phosphoribosyl-ATP pyrophosphatase (94 aa).

The protein belongs to the PRA-PH family.

The protein localises to the cytoplasm. It catalyses the reaction 1-(5-phospho-beta-D-ribosyl)-ATP + H2O = 1-(5-phospho-beta-D-ribosyl)-5'-AMP + diphosphate + H(+). Its pathway is amino-acid biosynthesis; L-histidine biosynthesis; L-histidine from 5-phospho-alpha-D-ribose 1-diphosphate: step 2/9. The protein is Phosphoribosyl-ATP pyrophosphatase of Pyrobaculum calidifontis (strain DSM 21063 / JCM 11548 / VA1).